The following is a 42-amino-acid chain: Alpha-lactalbumin I (42 aa).

Positions 1 to 42 (IDYRKCQASQILKEHGMDKVIPLPELVCTMFHISGLSPQAEV) constitute a C-type lysozyme domain.

It belongs to the glycosyl hydrolase 22 family. As to quaternary structure, lactose synthase (LS) is a heterodimer of a catalytic component, beta1,4-galactosyltransferase (beta4Gal-T1) and a regulatory component, alpha-lactalbumin (LA). In terms of tissue distribution, mammary gland specific. Secreted in milk.

It localises to the secreted. In terms of biological role, regulatory subunit of lactose synthase, changes the substrate specificity of galactosyltransferase in the mammary gland making glucose a good acceptor substrate for this enzyme. This enables LS to synthesize lactose, the major carbohydrate component of milk. In other tissues, galactosyltransferase transfers galactose onto the N-acetylglucosamine of the oligosaccharide chains in glycoproteins. The polypeptide is Alpha-lactalbumin I (LALBA) (Macropus giganteus (Eastern gray kangaroo)).